Here is a 677-residue protein sequence, read N- to C-terminus: Secretogranin-1 (677 aa).

The N-terminal stretch at 1–20 (MQPAMLLGLLGAAALAAVSS) is a signal peptide. Cys36 and Cys57 are joined by a disulfide. Disordered regions lie at residues 63-505 (KSGK…RQYE) and 531-558 (NSDFEKRGNPDDSFLEDEGEDRNGVTLT). The span at 64–90 (SGKEVKGEEKGENQNSKFEVRLLRDPA) shows a compositional bias: basic and acidic residues. Phosphoserine occurs at positions 93, 99, and 100. Ser93 is a glycosylation site (O-linked (Xyl...) (chondroitin sulfate) serine). O-linked (GalNAc...) threonine glycosylation occurs at Thr115. The segment covering 118–133 (GNEKWTEGGGHSREGV) has biased composition (basic and acidic residues). Ser129, Ser147, Ser190, and Ser220 each carry phosphoserine. Composition is skewed to basic and acidic residues over residues 148 to 192 (KEAK…DSGE) and 200 to 249 (KRSE…KPQE). O-linked (Xyl...) (chondroitin sulfate) serine glycosylation is present at Ser237. Residues 251 to 280 (TDQDQSQEESQEGEEGEEGEEGEEGEEDSA) are compositionally biased toward acidic residues. 6 positions are modified to phosphoserine: Ser256, Ser260, Ser300, Ser301, Ser318, and Ser342. Over residues 306-322 (PLSEERRPSPKESKEAD) the composition is skewed to basic and acidic residues. The residue at position 348 (Tyr348) is a Sulfotyrosine. 2 stretches are compositionally biased toward basic and acidic residues: residues 363-409 (RGSE…ERSY) and 421-455 (GREPGAHSALDTREEKRLLDEGHYPVRESPIDTAK). Phosphoserine occurs at positions 365, 375, and 378. Tyr472 is modified (sulfotyrosine). Basic and acidic residues predominate over residues 491 to 504 (EESREEVRFPDRQY). Residues Ser493, Ser532, and Ser543 each carry the phosphoserine modification. Tyr566 and Tyr624 each carry sulfotyrosine. The disordered stretch occupies residues 622–646 (DFYDSEEQMGPHQEANDEKARADQR). Residue Ser626 is modified to Phosphoserine. Residues 635-646 (EANDEKARADQR) show a composition bias toward basic and acidic residues.

It belongs to the chromogranin/secretogranin protein family. In terms of assembly, interacts with ITPR1 in the secretory granules.

Its subcellular location is the secreted. In terms of biological role, secretogranin-1 is a neuroendocrine secretory granule protein, which may be the precursor for other biologically active peptides. In Mus musculus (Mouse), this protein is Secretogranin-1 (Chgb).